The following is a 507-amino-acid chain: Putative thymidine phosphorylase (507 aa).

It belongs to the thymidine/pyrimidine-nucleoside phosphorylase family. Type 2 subfamily.

The catalysed reaction is thymidine + phosphate = 2-deoxy-alpha-D-ribose 1-phosphate + thymine. The protein is Putative thymidine phosphorylase of Ralstonia nicotianae (strain ATCC BAA-1114 / GMI1000) (Ralstonia solanacearum).